The following is a 384-amino-acid chain: Omega-6 fatty acid desaturase, endoplasmic reticulum (384 aa).

Residues 1 to 23 (MGAGGRMQVSPSPKKSETDTLKR) form a disordered region. Over residues 14 to 23 (KKSETDTLKR) the composition is skewed to basic and acidic residues. 2 helical membrane passes run 56-76 (LIWDIIVASCFYYVATTYFPL) and 84-104 (VAWPLYWACQGVVLTGVWVIA). The Histidine box-1 motif lies at 105–109 (HECGH). Residues 117–137 (WLDDTVGLIFHSFLLVPYFSW) traverse the membrane as a helical segment. Residues 141 to 145 (HRRHH) carry the Histidine box-2 motif. 3 consecutive transmembrane segments (helical) span residues 180 to 200 (VMLTVQFTLGWPLYWAFNVSG), 226 to 246 (IYVSDAGILAVCYGLYRYAAA), and 253 to 273 (VCLYGVPLLIVNAFLVLITYL). Residues 316-320 (HVAHH) carry the Histidine box-3 motif.

It belongs to the fatty acid desaturase type 1 family.

It is found in the endoplasmic reticulum membrane. It participates in lipid metabolism; polyunsaturated fatty acid biosynthesis. ER (microsomal) omega-6 fatty acid desaturase introduces the second double bond in the biosynthesis of 18:3 fatty acids, important constituents of plant membranes. It is thought to use cytochrome b5 as an electron donor and to act on fatty acids esterified to phosphatidylcholine and, possibly, other phospholipids. The chain is Omega-6 fatty acid desaturase, endoplasmic reticulum from Brassica juncea (Indian mustard).